Reading from the N-terminus, the 71-residue chain is Small ribosomal subunit protein eS17 (71 aa).

This sequence belongs to the eukaryotic ribosomal protein eS17 family.

In Pyrobaculum arsenaticum (strain DSM 13514 / JCM 11321 / PZ6), this protein is Small ribosomal subunit protein eS17.